The chain runs to 70 residues: Turripeptide Pal9.2 (70 aa).

Positions 1-20 (MKVYCLLVVLLVGLVSQTQG) are cleaved as a signal peptide. Positions 21-70 (QLDKKCNMACTLDYRPVCGSDGKTYPNRCALTSTACESQQSITVLHDGEC) constitute a Kazal-like domain. Intrachain disulfides connect Cys-26-Cys-56, Cys-30-Cys-49, and Cys-38-Cys-70.

The protein belongs to the conopeptide P-like superfamily. In terms of tissue distribution, expressed by the venom duct.

Its subcellular location is the secreted. Its function is as follows. Acts as a neurotoxin by inhibiting an ion channel. May also act as a serine protease inhibitor, since it possess the kazal serine protease inhibitor signature. This chain is Turripeptide Pal9.2, found in Polystira albida (White giant-turris).